The chain runs to 609 residues: UvrABC system protein C (609 aa).

The GIY-YIG domain occupies 15 to 92; the sequence is TGSGVYQMQD…IKQFRPRYNV (78 aa). The UVR domain occupies 202 to 237; that stretch reads DQVIIKLTERMEVTSENLVFEEAAHYRDQIRQLRRL.

This sequence belongs to the UvrC family. In terms of assembly, interacts with UvrB in an incision complex.

Its subcellular location is the cytoplasm. In terms of biological role, the UvrABC repair system catalyzes the recognition and processing of DNA lesions. UvrC both incises the 5' and 3' sides of the lesion. The N-terminal half is responsible for the 3' incision and the C-terminal half is responsible for the 5' incision. The polypeptide is UvrABC system protein C (Coxiella burnetii (strain RSA 493 / Nine Mile phase I)).